A 259-amino-acid chain; its full sequence is UDP-2,3-diacylglucosamine hydrolase (259 aa).

Mn(2+) contacts are provided by aspartate 8, histidine 10, aspartate 41, asparagine 79, and histidine 114. Residue 79-80 (NR) participates in substrate binding. Substrate-binding residues include aspartate 122, serine 160, asparagine 164, lysine 167, and histidine 195. Mn(2+) contacts are provided by histidine 195 and histidine 197.

It belongs to the LpxH family. Requires Mn(2+) as cofactor.

Its subcellular location is the cell inner membrane. The enzyme catalyses UDP-2-N,3-O-bis[(3R)-3-hydroxytetradecanoyl]-alpha-D-glucosamine + H2O = 2-N,3-O-bis[(3R)-3-hydroxytetradecanoyl]-alpha-D-glucosaminyl 1-phosphate + UMP + 2 H(+). It functions in the pathway glycolipid biosynthesis; lipid IV(A) biosynthesis; lipid IV(A) from (3R)-3-hydroxytetradecanoyl-[acyl-carrier-protein] and UDP-N-acetyl-alpha-D-glucosamine: step 4/6. Functionally, hydrolyzes the pyrophosphate bond of UDP-2,3-diacylglucosamine to yield 2,3-diacylglucosamine 1-phosphate (lipid X) and UMP by catalyzing the attack of water at the alpha-P atom. Involved in the biosynthesis of lipid A, a phosphorylated glycolipid that anchors the lipopolysaccharide to the outer membrane of the cell. The protein is UDP-2,3-diacylglucosamine hydrolase of Edwardsiella ictaluri (strain 93-146).